A 260-amino-acid polypeptide reads, in one-letter code: tRNA (guanine-N(1)-)-methyltransferase (260 aa).

S-adenosyl-L-methionine-binding positions include G117 and 137-142; that span reads LGDFVL.

This sequence belongs to the RNA methyltransferase TrmD family. Homodimer.

The protein localises to the cytoplasm. It carries out the reaction guanosine(37) in tRNA + S-adenosyl-L-methionine = N(1)-methylguanosine(37) in tRNA + S-adenosyl-L-homocysteine + H(+). In terms of biological role, specifically methylates guanosine-37 in various tRNAs. This chain is tRNA (guanine-N(1)-)-methyltransferase, found in Cupriavidus necator (strain ATCC 17699 / DSM 428 / KCTC 22496 / NCIMB 10442 / H16 / Stanier 337) (Ralstonia eutropha).